The chain runs to 116 residues: Large ribosomal subunit protein uL18 (116 aa).

Belongs to the universal ribosomal protein uL18 family. In terms of assembly, part of the 50S ribosomal subunit; part of the 5S rRNA/L5/L18/L25 subcomplex. Contacts the 5S and 23S rRNAs.

This is one of the proteins that bind and probably mediate the attachment of the 5S RNA into the large ribosomal subunit, where it forms part of the central protuberance. This is Large ribosomal subunit protein uL18 from Shewanella sp. (strain ANA-3).